A 362-amino-acid chain; its full sequence is Phosphoserine aminotransferase (362 aa).

L-glutamate contacts are provided by Ser9 and Arg42. Pyridoxal 5'-phosphate is bound by residues 76 to 77, Trp102, Thr153, Asp174, and Gln197; that span reads GR. N6-(pyridoxal phosphate)lysine is present on Lys198. 239 to 240 contributes to the pyridoxal 5'-phosphate binding site; that stretch reads NT.

Belongs to the class-V pyridoxal-phosphate-dependent aminotransferase family. SerC subfamily. In terms of assembly, homodimer. The cofactor is pyridoxal 5'-phosphate.

Its subcellular location is the cytoplasm. The catalysed reaction is O-phospho-L-serine + 2-oxoglutarate = 3-phosphooxypyruvate + L-glutamate. It carries out the reaction 4-(phosphooxy)-L-threonine + 2-oxoglutarate = (R)-3-hydroxy-2-oxo-4-phosphooxybutanoate + L-glutamate. Its pathway is amino-acid biosynthesis; L-serine biosynthesis; L-serine from 3-phospho-D-glycerate: step 2/3. It participates in cofactor biosynthesis; pyridoxine 5'-phosphate biosynthesis; pyridoxine 5'-phosphate from D-erythrose 4-phosphate: step 3/5. Its function is as follows. Catalyzes the reversible conversion of 3-phosphohydroxypyruvate to phosphoserine and of 3-hydroxy-2-oxo-4-phosphonooxybutanoate to phosphohydroxythreonine. In Citrobacter koseri (strain ATCC BAA-895 / CDC 4225-83 / SGSC4696), this protein is Phosphoserine aminotransferase.